Reading from the N-terminus, the 458-residue chain is Aldehyde dehydrogenase (458 aa).

NADP(+) is bound by residues 134–135 (WN), 158–161 (KHAS), and 210–211 (GS). Glutamate 232 (proton acceptor) is an active-site residue. Leucine 233 is a binding site for NADP(+). The Nucleophile role is filled by cysteine 266. NADP(+) is bound at residue glutamate 363.

It belongs to the aldehyde dehydrogenase family. As to quaternary structure, monomer.

The catalysed reaction is an aldehyde + NAD(+) + H2O = a carboxylate + NADH + 2 H(+). It catalyses the reaction an aldehyde + NADP(+) + H2O = a carboxylate + NADPH + 2 H(+). The protein operates within carbohydrate metabolism; D-xylose degradation. Its function is as follows. Aldehyde dehydrogenase able to oxidize various aldehydes such as formaldehyde, glyceraldehyde, butyraldehyde, glutaraldehyde and benzaldehyde (in vitro). Is likely involved in the oxidative D-xylose degradation pathway, catalyzing the oxidation step of 2-oxoglutarate semialdehyde to 2-oxoglutarate. Is able to use both NAD(+) and NADP(+); however, shows a preference for NADP(+). Does not display succinate semialdehyde dehydrogenase activity. The protein is Aldehyde dehydrogenase (aldh) of Paenarthrobacter nicotinovorans (Arthrobacter nicotinovorans).